The primary structure comprises 431 residues: 5-methylthioadenosine/S-adenosylhomocysteine deaminase (431 aa).

Positions 66 and 68 each coordinate Zn(2+). Substrate contacts are provided by Glu-95, Arg-147, and His-185. His-212 lines the Zn(2+) pocket. 2 residues coordinate substrate: Glu-215 and Asp-300. Asp-300 contacts Zn(2+).

It belongs to the metallo-dependent hydrolases superfamily. MTA/SAH deaminase family. It depends on Zn(2+) as a cofactor.

It carries out the reaction S-adenosyl-L-homocysteine + H2O + H(+) = S-inosyl-L-homocysteine + NH4(+). The catalysed reaction is S-methyl-5'-thioadenosine + H2O + H(+) = S-methyl-5'-thioinosine + NH4(+). Its function is as follows. Catalyzes the deamination of 5-methylthioadenosine and S-adenosyl-L-homocysteine into 5-methylthioinosine and S-inosyl-L-homocysteine, respectively. Is also able to deaminate adenosine. In Desulfitobacterium hafniense (strain DSM 10664 / DCB-2), this protein is 5-methylthioadenosine/S-adenosylhomocysteine deaminase.